The sequence spans 594 residues: Phostensin (594 aa).

Basic and acidic residues-rich tracts occupy residues 18–33 (EEAA…RDRL) and 109–125 (VLGD…ERRS). Disordered stretches follow at residues 18–238 (EEAA…PTDV) and 294–485 (VQDI…GKKR). 4 positions are modified to phosphoserine: S126, S134, S174, and S194. Basic and acidic residues-rich tracts occupy residues 133–155 (QSPK…DRRL) and 167–190 (SLRD…EAQK). At T198 the chain carries Phosphothreonine. S224 bears the Phosphoserine mark. Acidic residues predominate over residues 353–364 (EAEEEAEKEEAE). Pro residues predominate over residues 403-421 (PRPPTPAPLSPPPSAPTAP). Residue S412 is modified to Phosphoserine. The residue at position 437 (K437) is an N6-acetyllysine. Residue S510 is modified to Phosphoserine. Residues 531–577 (YQYPSESSVLEDLGPEPETPIAPLATQPDEEEEEEEEEEELLLQPGL) form a disordered region. Positions 558–571 (PDEEEEEEEEEEEL) are enriched in acidic residues.

In terms of assembly, interacts with Protein phosphatase 1 (PP1).

The protein localises to the cytoplasm. The protein resides in the cytoskeleton. May target protein phosphatase 1 to F-actin cytoskeleton. The protein is Phostensin (Ppp1r18) of Mus musculus (Mouse).